Here is a 350-residue protein sequence, read N- to C-terminus: Deoxyhypusine synthase-like protein (350 aa).

The protein belongs to the deoxyhypusine synthase family.

This is Deoxyhypusine synthase-like protein from Chlorobaculum tepidum (strain ATCC 49652 / DSM 12025 / NBRC 103806 / TLS) (Chlorobium tepidum).